Here is a 447-residue protein sequence, read N- to C-terminus: Blue-light photoreceptor PHR2 (447 aa).

The span at 1 to 14 shows a compositional bias: polar residues; it reads MDSSNVEENLNPET. Positions 1–20 are disordered; it reads MDSSNVEENLNPETKSAEEQ. The Photolyase/cryptochrome alpha/beta domain occupies 115-249; the sequence is RAAVVWFRND…EVKYFWGSTL (135 aa).

Belongs to the DNA photolyase class-1 family. The cofactor is FAD.

In Arabidopsis thaliana (Mouse-ear cress), this protein is Blue-light photoreceptor PHR2 (PHR2).